Consider the following 534-residue polypeptide: DNA-directed RNA polymerase III subunit RPC3 (534 aa).

Residues 161–181 (PSVPTTENSDPGPPPPAPTLV) are disordered. The residue at position 194 (serine 194) is a Phosphoserine. Positions 197–228 (GKGKRRRSSDEDAAGEPKAKRPKYTTDNKEPI) are disordered. The span at 211–228 (GEPKAKRPKYTTDNKEPI) shows a compositional bias: basic and acidic residues.

The protein belongs to the eukaryotic RPC3/POLR3C RNA polymerase subunit family. In terms of assembly, component of the RNA polymerase III complex consisting of 17 subunits: a ten-subunit horseshoe-shaped catalytic core composed of POLR3A/RPC1, POLR3B/RPC2, POLR1C/RPAC1, POLR1D/RPAC2, POLR3K/RPC10, POLR2E/RPABC1, POLR2F/RPABC2, POLR2H/RPABC3, POLR2K/RPABC4 and POLR2L/RPABC5; a mobile stalk composed of two subunits POLR3H/RPC8 and CRCP/RPC9, protruding from the core and functioning primarily in transcription initiation; and additional subunits homologous to general transcription factors of the RNA polymerase II machinery, POLR3C/RPC3-POLR3F/RPC6-POLR3G/RPC7 heterotrimer required for transcription initiation and POLR3D/RPC4-POLR3E/RPC5 heterodimer involved in both transcription initiation and termination. Directly interacts with POLR3G/RPC7 and POLR3GL. Directly interacts with POLR3F/RPC6. Interacts with GTF3C4. As part of the RNA polymerase III complex, interacts with PKP2.

Its subcellular location is the nucleus. Its function is as follows. DNA-dependent RNA polymerase catalyzes the transcription of DNA into RNA using the four ribonucleoside triphosphates as substrates. Specific peripheric component of RNA polymerase III (Pol III) which synthesizes small non-coding RNAs including 5S rRNA, snRNAs, tRNAs and miRNAs from at least 500 distinct genomic loci. Part of POLR3C/RPC3-POLR3F/RPC6-POLR3G/RPC7 heterotrimer, coordinates the dynamics of Pol III stalk and clamp modules during the transition from apo to elongation state. Pol III plays a key role in sensing and limiting infection by intracellular bacteria and DNA viruses. Acts as a nuclear and cytosolic DNA sensor involved in innate immune response. Can sense non-self dsDNA that serves as template for transcription into dsRNA. The non-self RNA polymerase III transcripts, such as Epstein-Barr virus-encoded RNAs (EBERs) induce type I interferon and NF-kappa-B through the RIG-I pathway. Preferentially binds single-stranded DNA (ssDNA) in a sequence-independent manner. The sequence is that of DNA-directed RNA polymerase III subunit RPC3 from Homo sapiens (Human).